Consider the following 423-residue polypeptide: AP-1 complex subunit mu-1 (423 aa).

An N-acetylserine modification is found at S2. Residues T152, T154, and T223 each carry the phosphothreonine modification. The 254-residue stretch at 168-421 (KNEVFLDVIE…ITQNGDYQLR (254 aa)) folds into the MHD domain.

It belongs to the adaptor complexes medium subunit family. Adaptor protein complex 1 (AP-1) is a heterotetramer composed of two large adaptins (gamma-type subunit AP1G1 and beta-type subunit AP1B1), a medium adaptin (mu-type subunit AP1M1 or AP1M2) and a small adaptin (sigma-type subunit AP1S1 or AP1S2 or AP1S3). Interacts with MARCHF11. Post-translationally, phosphorylation of membrane-bound AP1M1/AP1M2 increases its affinity for sorting signals.

The protein localises to the golgi apparatus. Its subcellular location is the cytoplasmic vesicle. The protein resides in the clathrin-coated vesicle membrane. Its function is as follows. Subunit of clathrin-associated adaptor protein complex 1 that plays a role in protein sorting in the trans-Golgi network (TGN) and endosomes. The AP complexes mediate the recruitment of clathrin to membranes and the recognition of sorting signals within the cytosolic tails of transmembrane cargo molecules. This Mus musculus (Mouse) protein is AP-1 complex subunit mu-1 (Ap1m1).